A 264-amino-acid chain; its full sequence is MQGYLQLLDEVLHDGIDRDDRTGVGTRSLFGRQMRFDLAEGFPLLTTKKLHIRSILHELLWFLRGDTNIGYLKENKVSIWDEWADEAGDLGPVYGHQWRSWEGANGDTVDQIAWVENEIRTNPRSRRLVVSAWNVADVPKMALPPCHLLFQFYVSGGRLSCQLYQRSADLFLGVPFNIASYAMLTSMMAHVTGLKPGEFVHTLGDVHLYSNHFDQAREQLSRTPRPLPTFHIKRDVASVTDFQFDDFELTNYDPHPHIKAPVAV.

Arginine 21 contacts dUMP. Histidine 51 is a binding site for (6R)-5,10-methylene-5,6,7,8-tetrahydrofolate. 126–127 (RR) is a binding site for dUMP. Cysteine 146 (nucleophile) is an active-site residue. DUMP-binding positions include 166–169 (RSAD), asparagine 177, and 207–209 (HLY). Aspartate 169 contributes to the (6R)-5,10-methylene-5,6,7,8-tetrahydrofolate binding site. A (6R)-5,10-methylene-5,6,7,8-tetrahydrofolate-binding site is contributed by alanine 263.

It belongs to the thymidylate synthase family. Bacterial-type ThyA subfamily. In terms of assembly, homodimer.

The protein resides in the cytoplasm. It catalyses the reaction dUMP + (6R)-5,10-methylene-5,6,7,8-tetrahydrofolate = 7,8-dihydrofolate + dTMP. It functions in the pathway pyrimidine metabolism; dTTP biosynthesis. Functionally, catalyzes the reductive methylation of 2'-deoxyuridine-5'-monophosphate (dUMP) to 2'-deoxythymidine-5'-monophosphate (dTMP) while utilizing 5,10-methylenetetrahydrofolate (mTHF) as the methyl donor and reductant in the reaction, yielding dihydrofolate (DHF) as a by-product. This enzymatic reaction provides an intracellular de novo source of dTMP, an essential precursor for DNA biosynthesis. This Rhodopirellula baltica (strain DSM 10527 / NCIMB 13988 / SH1) protein is Thymidylate synthase.